Here is a 589-residue protein sequence, read N- to C-terminus: Ubiquilin-1 (589 aa).

Gly residues predominate over residues 1–11 (MAESGESGGPP). Disordered stretches follow at residues 1–35 (MAES…AEPK) and 110–145 (NRPQ…ATSN). Residue A2 is modified to N-acetylalanine. The span at 12-35 (GSQDSAAGAEGAGAPAAAASAEPK) shows a compositional bias: low complexity. The 75-residue stretch at 37–111 (MKVTVKTPKE…VHLVIKTQNR (75 aa)) folds into the Ubiquitin-like domain. The span at 110-124 (NRPQDHSAQQTNTAG) shows a compositional bias: polar residues. Residues 125–145 (SNVTTSSTPNSNSTSGSATSN) show a composition bias toward low complexity. The interval 178–428 (QLLSNPEMMV…LNNPLFAGNP (251 aa)) is interaction with UBXN4. STI1 domains follow at residues 182–210 (NPEM…QLIM) and 212–251 (NPQM…MQEM). The interval 295 to 371 (PFASLVSNTS…NLVPGVGASM (77 aa)) is disordered. Positions 299 to 313 (LVSNTSSGEGSQPSR) are enriched in polar residues. The span at 327-360 (QTSQSSSASSGTASTVGGTTGSTASGTSGQSTTA) shows a compositional bias: low complexity. STI1 domains are found at residues 387–434 (NPQL…QEQM) and 438–470 (LPTF…QQGL). The disordered stretch occupies residues 488-520 (LGALGSTGGSSGTNGSNATPSENTSPTAGTTEP). Positions 489 to 499 (GALGSTGGSSG) are enriched in gly residues. Residues 509–520 (ENTSPTAGTTEP) are compositionally biased toward polar residues. Positions 546–586 (RFQQQLEQLSAMGFLNREANLQALIATGGDINAAIERLLGS) constitute a UBA domain.

Monomer and homodimer. Heterodimer with UBQLN2. Binds CD47, NBL1, GABRA1, GABRA2, GABRA3, GABRA6, GABRB1, GABRB2 and GABRB3. Binds UBE3A, BTRC, P4HB and MTOR. Interacts with the proteasome 19S subunit. Interacts (via ubiquitin-like domain) with TREX1; the interaction is direct and may control TREX1 subcellular location. Forms a complex with UBXN4 and VCP. Interacts (via UBA domain) with UBQLN4 (via ubiquitin-like domain). Found in a complex with UBQLN2 and MAP1LC3A/B/C. The monomeric form interacts with PSEN2. The monomeric form interacts with PSEN1. Interacts with ORAI1. Interacts (via UBA domain) with TICAM1. Interacts with EPS15. Interacts (via UBA domain) with UBA52 and (via ubiquitin-like domain) with PSMD3 and PSMD4. Interacts with HERPUD1. Interacts with MAP1LC3A/B/C in the presence of UBQLN4. Interacts (via ubiquitin-like domain) with EPS15 (via UIM domains) and both the ubiquitinated and non-ubiquitinated forms can interact with EPS15. Interacts (via ubiquitin-like domain) with EPS15L1, HGS (via UIM domain) and STAM2 (via UIM domain). Interacts with BCL2L10/BCL-B; in the cytoplasm. As to quaternary structure, monomeric form interacts with PSEN1. Degraded during both macroautophagy and during chaperone-mediated autophagy (CMA). In terms of processing, phosphorylated. Post-translationally, ubiquitinated. As to expression, brain (at protein level). Ubiquitous. Highly expressed throughout the brain; detected in neurons and in neuropathological lesions, such as neurofibrillary tangles and Lewy bodies. Highly expressed in heart, placenta, pancreas, lung, liver, skeletal muscle and kidney.

The protein resides in the cytoplasm. The protein localises to the nucleus. It is found in the endoplasmic reticulum. Its subcellular location is the cytoplasmic vesicle. It localises to the autophagosome. The protein resides in the cell membrane. Its function is as follows. Plays an important role in the regulation of different protein degradation mechanisms and pathways including ubiquitin-proteasome system (UPS), autophagy and endoplasmic reticulum-associated protein degradation (ERAD) pathway. Mediates the proteasomal targeting of misfolded or accumulated proteins for degradation by binding (via UBA domain) to their polyubiquitin chains and by interacting (via ubiquitin-like domain) with the subunits of the proteasome. Plays a role in the ERAD pathway via its interaction with ER-localized proteins UBXN4, VCP and HERPUD1 and may form a link between the polyubiquitinated ERAD substrates and the proteasome. Involved in the regulation of macroautophagy and autophagosome formation; required for maturation of autophagy-related protein LC3 from the cytosolic form LC3-I to the membrane-bound form LC3-II and may assist in the maturation of autophagosomes to autolysosomes by mediating autophagosome-lysosome fusion. Negatively regulates the TICAM1/TRIF-dependent toll-like receptor signaling pathway by decreasing the abundance of TICAM1 via the autophagic pathway. Promotes the ubiquitination and lysosomal degradation of ORAI1, consequently down-regulating the ORAI1-mediated Ca2+ mobilization. Suppresses the maturation and proteasomal degradation of amyloid beta A4 protein (A4) by stimulating the lysine 63 (K63)-linked polyubiquitination. Delays the maturation of A4 by sequestering it in the Golgi apparatus and preventing its transport to the cell surface for subsequent processing. Ubiquitinates BCL2L10 and thereby stabilizes protein abundance. Plays a role in unfolded protein response (UPR) by attenuating the induction of UPR-inducible genes, DDTI3/CHOP, HSPA5 and PDIA2 during ER stress. Plays a key role in the regulation of the levels of PSEN1 by targeting its accumulation to aggresomes which may then be removed from cells by autophagocytosis. In terms of biological role, plays a role in unfolded protein response (UPR) by attenuating the induction of UPR-inducible genes, DDTI3/CHOP, HSPA5 and PDIA2 during ER stress. In Homo sapiens (Human), this protein is Ubiquilin-1 (UBQLN1).